The following is a 378-amino-acid chain: Ubiquitin-conjugating enzyme E2 Q2 (378 aa).

The tract at residues 126–152 is disordered; it reads DQPLPTGQNGTTEEVTSEEEEEEEMAE. Acidic residues predominate over residues 140–152; the sequence is VTSEEEEEEEMAE. Residues 207-371 enclose the UBC core domain; it reads QASDRLMKEL…VQIHEKNGWY (165 aa). Cysteine 307 (glycyl thioester intermediate) is an active-site residue.

The protein belongs to the ubiquitin-conjugating enzyme family. Auto-ubiquitinated in vitro.

It localises to the cytoplasm. It catalyses the reaction S-ubiquitinyl-[E1 ubiquitin-activating enzyme]-L-cysteine + [E2 ubiquitin-conjugating enzyme]-L-cysteine = [E1 ubiquitin-activating enzyme]-L-cysteine + S-ubiquitinyl-[E2 ubiquitin-conjugating enzyme]-L-cysteine.. The protein operates within protein modification; protein ubiquitination. Functionally, accepts ubiquitin from the E1 complex and catalyzes its covalent attachment to other proteins. In vitro catalyzes 'Lys-48'-linked polyubiquitination. This is Ubiquitin-conjugating enzyme E2 Q2 (Ube2q2) from Mus musculus (Mouse).